The sequence spans 378 residues: Ferredoxin--NADP reductase, root isozyme 1, chloroplastic (378 aa).

The N-terminal 65 residues, 1 to 65, are a transit peptide targeting the chloroplast; that stretch reads MALSTTPSQM…KRSTICMSLQ (65 aa). One can recognise an FAD-binding FR-type domain in the interval 93–221; the sequence is KEPYTATIVS…TGPSGKVMLL (129 aa). C196 and C201 are oxidised to a cystine. S197 carries the phosphoserine modification. T229 carries the post-translational modification Phosphothreonine. 231–249 provides a ligand contact to NADP(+); the sequence is IMIATGTGVAPYRGYLRRM. Residues 349-373 adopt a coiled-coil conformation; the sequence is LKRVAEERGESWEQKLTQLRKNKQW.

This sequence belongs to the ferredoxin--NADP reductase type 1 family. FAD is required as a cofactor. Expressed in shoots and roots. Less abundant in roots than RFNR2.

Its subcellular location is the plastid. It localises to the chloroplast. It carries out the reaction 2 reduced [2Fe-2S]-[ferredoxin] + NADP(+) + H(+) = 2 oxidized [2Fe-2S]-[ferredoxin] + NADPH. Its function is as follows. Maintains the supply of reduced ferredoxin under non-photosynthetic conditions. This is Ferredoxin--NADP reductase, root isozyme 1, chloroplastic (RFNR1) from Arabidopsis thaliana (Mouse-ear cress).